We begin with the raw amino-acid sequence, 293 residues long: Delta(3,5)-Delta(2,4)-dienoyl-CoA isomerase, mitochondrial (293 aa).

Residues 84–88 (AGLNL) and Gly-142 contribute to the substrate site.

This sequence belongs to the enoyl-CoA hydratase/isomerase family.

The protein resides in the mitochondrion. It carries out the reaction (3E,5Z)-octadienoyl-CoA = (2E,4E)-octadienoyl-CoA. The enzyme catalyses (3E,5Z,8Z,11Z,14Z)-eicosapentaenoyl-CoA = (2E,4E,8Z,11Z,14Z)-eicosapentaenoyl-CoA. The protein operates within lipid metabolism; fatty acid beta-oxidation. In terms of biological role, isomerization of 3-trans,5-cis-dienoyl-CoA to 2-trans,4-trans-dienoyl-CoA. This chain is Delta(3,5)-Delta(2,4)-dienoyl-CoA isomerase, mitochondrial (ech1), found in Dictyostelium discoideum (Social amoeba).